The primary structure comprises 571 residues: MAAYGQISSGMTVDPQVLSSSRNIGVSLSPLRRTLIGAGVRSTSISLRQCSLSVRSIKISEDSRKPKAYAENGAFDVGVLDSSSYRLADSRTSSNDSRRKTKIVCTIGPSSSSREMIWKLAEAGMNVARLNMSHGDHASHQITIDLVKEYNSLFVDKAIAIMLDTKGPEVRSGDVPQPIFLEEGQEFNFTIKRGVSLKDTVSVNYDDFVNDVEVGDILLVDGGMMSLAVKSKTSDLVKCVVIDGGELQSRRHLNVRGKSATLPSITDKDWEDIKFGVDNQVDFYAVSFVKDAKVVHELKNYLKTCSADISVIVKIESADSIKNLPSIISACDGAMVARGDLGAELPIEEVPLLQEEIIRRCRSIHKPVIVATNMLESMINHPTPTRAEVSDIAIAVREGADAIMLSGETAHGKFPLKAVNVMHTVALRTEASLPVRTSASRTTAYKGHMGQMFAFHASIMANTLSSPLIVFTRTGSMAVLLSHYRPSATIFAFTNQRRIMQRLALYQGVMPIYMEFSDDAEDTYARSLKLLQDENMLKEGQHVTLVQSGSQPIWREESTHLIQVRKIKIGG.

The N-terminal 55 residues, 1-55, are a transit peptide targeting the chloroplast; sequence MAAYGQISSGMTVDPQVLSSSRNIGVSLSPLRRTLIGAGVRSTSISLRQCSLSVR. A substrate-binding site is contributed by Arg129. Asn131, Ser133, Asp164, and Thr165 together coordinate K(+). Residue 131-134 coordinates ATP; the sequence is NMSH. Residue Arg171 coordinates ATP. Lys314 contributes to the substrate binding site. Glu316 serves as a coordination point for Mg(2+). Substrate is bound by residues Gly339, Asp340, and Thr372. Asp340 contacts Mg(2+).

Belongs to the pyruvate kinase family. As to quaternary structure, oligomer of alpha and beta subunits. It depends on Mg(2+) as a cofactor. K(+) serves as cofactor. In terms of tissue distribution, expressed at low levels in roots, leaves, inflorescences, siliques, pollen, seeds and flowers.

The protein resides in the plastid. It localises to the chloroplast stroma. The enzyme catalyses pyruvate + ATP = phosphoenolpyruvate + ADP + H(+). It functions in the pathway carbohydrate degradation; glycolysis; pyruvate from D-glyceraldehyde 3-phosphate: step 5/5. Required for plastidial pyruvate kinase activity. This chain is Plastidial pyruvate kinase 3, chloroplastic (PKP3), found in Arabidopsis thaliana (Mouse-ear cress).